Consider the following 490-residue polypeptide: Gallate decarboxylase (490 aa).

Asp165 is a Mn(2+) binding site. Residues 168 to 170 (IHR) and Gly187 contribute to the prenylated FMN site. Glu233 contacts Mn(2+). Glu289 functions as the Proton acceptor in the catalytic mechanism.

It belongs to the UbiD family. Prenylated FMN serves as cofactor. It depends on Mn(2+) as a cofactor.

It carries out the reaction 3,4,5-trihydroxybenzoate + H(+) = 1,2,3-trihydroxybenzene + CO2. The catalysed reaction is 3,4-dihydroxybenzoate + H(+) = catechol + CO2. Functionally, involved in tannin degradation. Catalyzes the decarboxylation of gallic acid and protocatechuic acid to pyrogallol and catechol, respectively. This chain is Gallate decarboxylase, found in Lactiplantibacillus plantarum (strain ATCC BAA-793 / NCIMB 8826 / WCFS1) (Lactobacillus plantarum).